Consider the following 339-residue polypeptide: Lipoate-protein ligase A (339 aa).

The BPL/LPL catalytic domain occupies 28 to 211 (NPDSHTLFLW…AFREYYRDTD (184 aa)). ATP is bound by residues R70, 75–78 (GAVF), and K129. K129 provides a ligand contact to (R)-lipoate.

Belongs to the LplA family. Monomer.

It localises to the cytoplasm. It catalyses the reaction L-lysyl-[lipoyl-carrier protein] + (R)-lipoate + ATP = N(6)-[(R)-lipoyl]-L-lysyl-[lipoyl-carrier protein] + AMP + diphosphate + H(+). It functions in the pathway protein modification; protein lipoylation via exogenous pathway; protein N(6)-(lipoyl)lysine from lipoate: step 1/2. It participates in protein modification; protein lipoylation via exogenous pathway; protein N(6)-(lipoyl)lysine from lipoate: step 2/2. Functionally, catalyzes both the ATP-dependent activation of exogenously supplied lipoate to lipoyl-AMP and the transfer of the activated lipoyl onto the lipoyl domains of lipoate-dependent enzymes. The protein is Lipoate-protein ligase A of Psychrobacter cryohalolentis (strain ATCC BAA-1226 / DSM 17306 / VKM B-2378 / K5).